Here is a 326-residue protein sequence, read N- to C-terminus: Protein-arginine N-acetylglucosaminyltransferase NleB2 (326 aa).

UDP-N-acetyl-alpha-D-glucosamine is bound by residues 45–47 (QWF), tyrosine 69, and 216–219 (YLDM). Residues 218 to 220 (DMD) carry the DXD motif motif. A Mn(2+)-binding site is contributed by aspartate 220. Catalysis depends on glutamate 250, which acts as the Proton acceptor. Mn(2+)-binding residues include asparagine 317 and serine 319. Residues serine 319 and 324–326 (SSW) each bind UDP-N-acetyl-alpha-D-glucosamine.

The protein belongs to the glycosyltransferase NleB family. Mn(2+) is required as a cofactor.

The protein localises to the secreted. The protein resides in the host cell. The enzyme catalyses L-arginyl-[protein] + UDP-N-acetyl-alpha-D-glucosamine = N(omega)-(N-acetyl-beta-D-glucosaminyl)-L-arginyl-[protein] + UDP + H(+). Functionally, protein-arginine N-acetylglucosaminyltransferase effector that catalyzes the transfer of a single N-acetylglucosamine (GlcNAc) to a conserved arginine residue of host target proteins. In contrast to NleB1, not able to disrupt TNF signaling in infected cells. Shows a lower enzymatic activity than NleB1. This is Protein-arginine N-acetylglucosaminyltransferase NleB2 from Escherichia coli O145:H28 (strain RM12581).